Here is a 701-residue protein sequence, read N- to C-terminus: Glycine--tRNA ligase beta subunit (701 aa).

This sequence belongs to the class-II aminoacyl-tRNA synthetase family. Tetramer of two alpha and two beta subunits.

The protein localises to the cytoplasm. The catalysed reaction is tRNA(Gly) + glycine + ATP = glycyl-tRNA(Gly) + AMP + diphosphate. The sequence is that of Glycine--tRNA ligase beta subunit from Bradyrhizobium sp. (strain BTAi1 / ATCC BAA-1182).